The chain runs to 351 residues: sn-glycerol-3-phosphate import ATP-binding protein UgpC (351 aa).

An ABC transporter domain is found at 4–234 (ITLKDLVKSY…PATLFVAGFI (231 aa)). 36–43 (GPSGCGKS) lines the ATP pocket.

It belongs to the ABC transporter superfamily. sn-glycerol-3-phosphate importer (TC 3.A.1.1.3) family. The complex is composed of two ATP-binding proteins (UgpC), two transmembrane proteins (UgpA and UgpE) and a solute-binding protein (UgpB).

Its subcellular location is the cell inner membrane. It carries out the reaction sn-glycerol 3-phosphate(out) + ATP + H2O = sn-glycerol 3-phosphate(in) + ADP + phosphate + H(+). Functionally, part of the ABC transporter complex UgpBAEC involved in sn-glycerol-3-phosphate (G3P) import. Responsible for energy coupling to the transport system. This Ruegeria sp. (strain TM1040) (Silicibacter sp.) protein is sn-glycerol-3-phosphate import ATP-binding protein UgpC.